We begin with the raw amino-acid sequence, 146 residues long: Ribonuclease H (146 aa).

Positions 1–143 constitute an RNase H type-1 domain; the sequence is MKKQVTIYTD…CDQLAREAIK (143 aa). Mg(2+) contacts are provided by aspartate 10, glutamate 48, aspartate 70, and aspartate 135.

It belongs to the RNase H family. As to quaternary structure, monomer. Mg(2+) is required as a cofactor.

The protein resides in the cytoplasm. The enzyme catalyses Endonucleolytic cleavage to 5'-phosphomonoester.. Its function is as follows. Endonuclease that specifically degrades the RNA of RNA-DNA hybrids. The protein is Ribonuclease H of Chlorobium chlorochromatii (strain CaD3).